The primary structure comprises 571 residues: MAKQIVFDDDARGPLLAGVSKLARAVRSTLGPRGRNAVLDKGWGSPKVTKDGVTVAEDIELDDPFENLGAQLVKEAASKTNDVAGDGTTTATVLSEAIFREGLKMVATGADPMALSRGIQKAVDTAIAQIAKMATPINEKSKSDIKQVATIAGNNDPQIGDVLADAFTKVGKNGVITVEEGRSNETYVDVVEGMQFDRGFLSPHFVTNQDEVTVELDDCYILLFEEKISNNKKMIPLLEAISKAKKPLLIIAEDTEGEALATLVVNKMRGILSACAVKAPGYGDRRKAILGDIAALTGGKAIFKDLGIDLESVKVSDLGRAKQIRITSEATTIVGGAGKKADIEGRVAQIRREIEATDSDYDREKLQERLAKLAGGVAQINVGAATETEMKERKALIDDARAATQAALEEGIVPGGGTALLRCRAAVEKLEKATEGDQKLGVRIIRNVLDQPMRAIANNAGLDGAVVVNRVLQMKGKTEGYDANADKYCDLVAAGIVDPAKVVRTSLTNAASVAALLLTTESLVTEIPVEEEPAGGDHHDHGMGGGMPDMGGMGMGGMGGMGGMGGMGGMM.

ATP contacts are provided by residues 29–32 (TLGP), K50, 86–90 (DGTTT), G416, and D498.

It belongs to the chaperonin (HSP60) family. Forms a cylinder of 14 subunits composed of two heptameric rings stacked back-to-back. Interacts with the co-chaperonin GroES.

The protein localises to the cytoplasm. It catalyses the reaction ATP + H2O + a folded polypeptide = ADP + phosphate + an unfolded polypeptide.. Functionally, together with its co-chaperonin GroES, plays an essential role in assisting protein folding. The GroEL-GroES system forms a nano-cage that allows encapsulation of the non-native substrate proteins and provides a physical environment optimized to promote and accelerate protein folding. This is Chaperonin GroEL 1 from Rhodopirellula baltica (strain DSM 10527 / NCIMB 13988 / SH1).